Reading from the N-terminus, the 1530-residue chain is Coiled-coil domain-containing protein 141 (1530 aa).

The Spectrin repeat unit spans residues 49 to 127 (NLLEIGSSQD…SMLERRRELL (79 aa)). Thr91 bears the Phosphothreonine mark. Coiled-coil stretches lie at residues 220-251 (IDSL…VLQL), 758-785 (LKEK…YEEI), and 865-967 (AKSL…VNKK). Disordered stretches follow at residues 1153 to 1240 (SEER…PASS), 1259 to 1285 (LGKA…DTFT), 1324 to 1356 (PREV…SNVT), and 1369 to 1403 (SPGL…SVVS). Residues 1334–1345 (PSSQAQEISLGT) are compositionally biased toward polar residues. The 89-residue stretch at 1409-1497 (PHFSRLLSNV…GTLSSKAILH (89 aa)) folds into the Ig-like domain.

As to quaternary structure, interacts with DISC1. Interacts preferentially with phosphorylated forms of myosin regulatory light chain (MRLC). Interacts (via the N-terminal region) with HDAC6; inhibits the deacetylase activity of HDAC6. Interacts with KIBRA (via the C-terminal region); retains AMPAR in the cytosol after internalization. In terms of processing, ubiquitinated and degradated by the CDC20-APC/C pathway. During brain development, CDC20-APC/C complex degrades CCDC141 after centrosome translocation into the dilated area. CCDC141 is restabilized in the dilation until the centrosome enters the dilation, at which point it is once again immediately destabilized by CDC20-APC/C complex. The oscillatory regulation of CCDC141 protein is needed for proper cortical migration. Phosphorylation at Thr-91 by PLK1 affects CCDC141 degradation.

It is found in the cytoplasm. It localises to the cytoskeleton. The protein resides in the microtubule organizing center. The protein localises to the centrosome. Plays a critical role in cortical radial and GnRH neurons migration during brain development. Regulates cortical radial migration by negatively controlling the activity of histone deacetylase 6 (HDAC6) and promotes centrosome maturation. CAMDI is required for dilation formation of cortical neurons during radial migration. Plays a critical role in learning and memory performance through regulation of AMPA-selective glutamate receptors (AMPARs) cell surface expression in competition with KIBRA. The polypeptide is Coiled-coil domain-containing protein 141 (Rattus norvegicus (Rat)).